Consider the following 420-residue polypeptide: Probable pectate lyase C (420 aa).

Residues 1–20 form the signal peptide; the sequence is MKLSAPLLVSLAAFSQAVTA. Asparagine 49, asparagine 165, and asparagine 202 each carry an N-linked (GlcNAc...) asparagine glycan. Arginine 205 is a catalytic residue. Residues 262-297 form the EF-hand domain; sequence NANFHGYVQNNYYDPDKDGQLDGFELGVSSSNYGGV. 5 residues coordinate Ca(2+): aspartate 275, aspartate 277, aspartate 279, glutamine 281, and glutamate 286. The interval 358–396 is disordered; the sequence is TMGGPGTLNGGTPAKDTDGDGIPDEAEKQLGTDPNTNDS. Asparagine 394 is a glycosylation site (N-linked (GlcNAc...) asparagine).

The protein belongs to the polysaccharide lyase 1 family. The cofactor is Ca(2+).

The protein resides in the secreted. It catalyses the reaction Eliminative cleavage of (1-&gt;4)-alpha-D-galacturonan to give oligosaccharides with 4-deoxy-alpha-D-galact-4-enuronosyl groups at their non-reducing ends.. Functionally, pectinolytic enzyme consist of four classes of enzymes: pectin lyase, polygalacturonase, pectin methylesterase and rhamnogalacturonase. Among pectinolytic enzymes, pectin lyase is the most important in depolymerization of pectin, since it cleaves internal glycosidic bonds of highly methylated pectins. Favors pectate, the anion, over pectin, the methyl ester. This chain is Probable pectate lyase C (plyC), found in Aspergillus fumigatus (strain CBS 144.89 / FGSC A1163 / CEA10) (Neosartorya fumigata).